A 109-amino-acid polypeptide reads, in one-letter code: Sperm-specific class P protein 9/11 (109 aa).

In terms of domain architecture, MSP spans 2–109 (SLTADPPACT…TVTIPMSATA (108 aa)).

Expressed at higher level in testis.

This Caenorhabditis elegans protein is Sperm-specific class P protein 9/11 (ssp-9).